We begin with the raw amino-acid sequence, 631 residues long: MDSVNNLCRHYEEKVRPCIDLIDTLRALGVEQDLALPAIAVIGDQSSGKSSVLEALSGVALPRGSGIVTRCPLVLKLRKLKEGEEWRGKVSYDDIEVELSDPSEVEEAINKGQNFIAGVGLGISDKLISLDVSSPNVPDLTLIDLPGITRVAVGNQPADIGRQIKRLIKTYIQKQETINLVVVPSNVDIATTEALSMAQEVDPEGDRTIGVLTKPDLVDRGAEGKVLDVMRNLVYPLKKGYMIVKCRGQQDIQEQLSLTEAFQKEQVFFKDHSYFSILLEDGKATVPCLAERLTEELTSHICKSLPLLEDQINSSHQSASEELQKYGADIPEDDRTRMSFLVNKISAFNRNIMNLIQAQETVSEGDSRLFTKLRNEFLAWDDHIEEYFKKDSPEVQSKMKEFENQYRGRELPGFVDYKAFESIIKKRVKALEESAVNMLRRVTKMVQTAFVKILSNDFGDFLNLCCTAKSKIKEIRLNQEKEAENLIRLHFQMEQIVYCQDQVYKETLKTIREKEAEKEKTKALINPATFQNNSQFPQKGLTTTEMTQHLKAYYQECRRNIGRQIPLIIQYFILKTFGEEIEKMMLQLLQDTSKCSWFLEEQSDTREKKKFLKRRLLRLDEARQKLAKFSD.

The 274-residue stretch at 33-306 (DLALPAIAVI…LTSHICKSLP (274 aa)) folds into the Dynamin-type G domain. The segment at 43-50 (GDQSSGKS) is G1 motif. A GTP-binding site is contributed by 43-50 (GDQSSGKS). Positions 68–70 (VTR) are G2 motif. Residues 144 to 147 (DLPG) are G3 motif. Residues 144-148 (DLPGI) and 213-216 (TKPD) each bind GTP. The segment at 213–216 (TKPD) is G4 motif. The interval 245 to 248 (KCRG) is G5 motif. The segment at 307 to 332 (LLEDQINSSHQSASEELQKYGADIPE) is bundle signaling element (BSE). The segment at 332 to 499 (EDDRTRMSFL…HFQMEQIVYC (168 aa)) is middle domain. The stalk stretch occupies residues 333–601 (DDRTRMSFLV…TSKCSWFLEE (269 aa)). A critical for lipid-binding region spans residues 520–522 (KTK). Positions 543–631 (TTEMTQHLKA…ARQKLAKFSD (89 aa)) constitute a GED domain.

This sequence belongs to the TRAFAC class dynamin-like GTPase superfamily. Dynamin/Fzo/YdjA family. Homooligomer. Oligomerizes into multimeric filamentous or ring-like structures by virtue of its stalk domain. Oligomerization is critical for GTPase activity, protein stability, and recognition of viral target structures. Interacts with TRPC1, TRPC3, TRPC4, TRPC5, TRPC6 and TRPC7. Interacts with HSPA5. Interacts with TUBB/TUBB5. Interacts with DDX39A and DDX39B. Post-translationally, ISGylated.

It localises to the cytoplasm. The protein resides in the nucleus. It is found in the endoplasmic reticulum membrane. The protein localises to the perinuclear region. Interferon-induced dynamin-like GTPase with antiviral activity against influenza A virus, (IAV), influenza B virus (IBV) and Thogoto virus (THOV). Inhibits FLUAV by interfering with the process of primary transcription, probably by affecting the viral polymerase function. This Mus musculus (Mouse) protein is Interferon-induced GTP-binding protein Mx1 (Mx1).